Consider the following 452-residue polypeptide: Elongation factor Tu, mitochondrial (452 aa).

The transit peptide at 1-43 (MAAATLLRATPRFSGLCASPTPFLQGRLRPLKAPASPFLCRGL) directs the protein to the mitochondrion. The region spanning 55 to 251 (KPHVNVGTIG…AVDTYIPVPT (197 aa)) is the tr-type G domain. A G1 region spans residues 64 to 71 (GHVDHGKT). Positions 67, 69, 70, 71, and 72 each coordinate GTP. Thr71 is a binding site for Mg(2+). Lys79 is modified (N6-acetyllysine). Lys88 is modified (N6-acetyllysine; alternate). Lys88 is modified (N6-succinyllysine; alternate). Residues 105–109 (GITIN) form a G2 region. The interval 126–129 (DCPG) is G3. 5 residues coordinate GTP: Asn181, Asp184, Ser219, Ala220, and Leu221. The tract at residues 181 to 184 (NKAD) is G4. Residues 219-221 (SAL) form a G5 region. At Lys234 the chain carries N6-succinyllysine. The residue at position 256 (Lys256) is an N6-acetyllysine. Position 278 is a phosphothreonine (Thr278). Lys286 is modified (N6-succinyllysine). Position 312 is a phosphoserine (Ser312). N6-acetyllysine is present on residues Lys361 and Lys418.

Belongs to the TRAFAC class translation factor GTPase superfamily. Classic translation factor GTPase family. EF-Tu/EF-1A subfamily. As to quaternary structure, interacts with NLRX1. Interacts with ATG16L1.

The protein resides in the mitochondrion. It catalyses the reaction GTP + H2O = GDP + phosphate + H(+). In terms of biological role, GTP hydrolase that promotes the GTP-dependent binding of aminoacyl-tRNA to the A-site of ribosomes during protein biosynthesis. Plays a role in the regulation of autophagy and innate immunity. Recruits ATG5-ATG12 and NLRX1 at mitochondria and serves as a checkpoint of the RIGI-MAVS pathway. In turn, inhibits RLR-mediated type I interferon while promoting autophagy. This Rattus norvegicus (Rat) protein is Elongation factor Tu, mitochondrial.